The following is a 76-amino-acid chain: Large ribosomal subunit protein bL31 (76 aa).

Zn(2+) contacts are provided by Cys16, Cys18, Cys37, and Cys40.

Belongs to the bacterial ribosomal protein bL31 family. Type A subfamily. Part of the 50S ribosomal subunit. It depends on Zn(2+) as a cofactor.

In terms of biological role, binds the 23S rRNA. This Maridesulfovibrio salexigens (strain ATCC 14822 / DSM 2638 / NCIMB 8403 / VKM B-1763) (Desulfovibrio salexigens) protein is Large ribosomal subunit protein bL31.